The sequence spans 612 residues: Glutamine--fructose-6-phosphate aminotransferase [isomerizing] (612 aa).

Cys2 acts as the Nucleophile; for GATase activity in catalysis. Positions 2 to 217 (CGIVGGVAER…EGDIARLTRD (216 aa)) constitute a Glutamine amidotransferase type-2 domain. 2 consecutive SIS domains span residues 283–428 (AEAD…VKEQ) and 461–602 (LSEL…VDQP). The For Fru-6P isomerization activity role is filled by Lys607.

Homodimer.

It localises to the cytoplasm. It carries out the reaction D-fructose 6-phosphate + L-glutamine = D-glucosamine 6-phosphate + L-glutamate. Its function is as follows. Catalyzes the first step in hexosamine metabolism, converting fructose-6P into glucosamine-6P using glutamine as a nitrogen source. This chain is Glutamine--fructose-6-phosphate aminotransferase [isomerizing], found in Acinetobacter baylyi (strain ATCC 33305 / BD413 / ADP1).